An 800-amino-acid polypeptide reads, in one-letter code: Protocadherin beta-10 (800 aa).

The signal sequence occupies residues 1-26 (MAVRELCFPRQRQVLFLFLFWGVSLA). Over 27-692 (GSGFGRYSVT…AEADLLTVYL (666 aa)) the chain is Extracellular. 5 consecutive Cadherin domains span residues 35–133 (VTEE…APVF), 138–242 (TVLK…APQF), 247–347 (YETQ…PPEL), 352–451 (FSNS…APAF), and 456–561 (YTLF…SPFV). Residues asparagine 169 and asparagine 181 are each glycosylated (N-linked (GlcNAc...) asparagine). N-linked (GlcNAc...) asparagine glycosylation is found at asparagine 418 and asparagine 436. The N-linked (GlcNAc...) asparagine glycan is linked to asparagine 567. The region spanning 568-671 (GSAPCTELVP…LVDGFSQPYL (104 aa)) is the Cadherin 6 domain. A helical membrane pass occupies residues 693–713 (VVALASVSSLFLLSVLLFVAV). Topologically, residues 714 to 800 (RLCRRSRAAS…FRNSFGFNIQ (87 aa)) are cytoplasmic.

Its subcellular location is the cell membrane. Its function is as follows. Potential calcium-dependent cell-adhesion protein. May be involved in the establishment and maintenance of specific neuronal connections in the brain. The sequence is that of Protocadherin beta-10 (PCDHB10) from Homo sapiens (Human).